Here is a 450-residue protein sequence, read N- to C-terminus: Bifunctional protein GlmU (450 aa).

Positions 1–229 (MRRHAIILAA…VEEIMGVNDR (229 aa)) are pyrophosphorylase. UDP-N-acetyl-alpha-D-glucosamine contacts are provided by residues 8–11 (LAAG), lysine 22, glutamine 72, and 77–78 (GT). Position 102 (aspartate 102) interacts with Mg(2+). UDP-N-acetyl-alpha-D-glucosamine contacts are provided by glycine 139, glutamate 154, and asparagine 227. Position 227 (asparagine 227) interacts with Mg(2+). Positions 230–250 (VMLSQAEKAMQRRTNHYHMLN) are linker. The N-acetyltransferase stretch occupies residues 251–450 (GVTIIDPDST…RQTTKEGYRK (200 aa)). UDP-N-acetyl-alpha-D-glucosamine-binding residues include arginine 332 and lysine 350. Histidine 362 functions as the Proton acceptor in the catalytic mechanism. UDP-N-acetyl-alpha-D-glucosamine-binding residues include tyrosine 365 and asparagine 376. Residues 385–386 (NY), alanine 422, and arginine 439 contribute to the acetyl-CoA site.

It in the N-terminal section; belongs to the N-acetylglucosamine-1-phosphate uridyltransferase family. The protein in the C-terminal section; belongs to the transferase hexapeptide repeat family. As to quaternary structure, homotrimer. It depends on Mg(2+) as a cofactor.

Its subcellular location is the cytoplasm. It carries out the reaction alpha-D-glucosamine 1-phosphate + acetyl-CoA = N-acetyl-alpha-D-glucosamine 1-phosphate + CoA + H(+). The catalysed reaction is N-acetyl-alpha-D-glucosamine 1-phosphate + UTP + H(+) = UDP-N-acetyl-alpha-D-glucosamine + diphosphate. It functions in the pathway nucleotide-sugar biosynthesis; UDP-N-acetyl-alpha-D-glucosamine biosynthesis; N-acetyl-alpha-D-glucosamine 1-phosphate from alpha-D-glucosamine 6-phosphate (route II): step 2/2. Its pathway is nucleotide-sugar biosynthesis; UDP-N-acetyl-alpha-D-glucosamine biosynthesis; UDP-N-acetyl-alpha-D-glucosamine from N-acetyl-alpha-D-glucosamine 1-phosphate: step 1/1. It participates in bacterial outer membrane biogenesis; LPS lipid A biosynthesis. Functionally, catalyzes the last two sequential reactions in the de novo biosynthetic pathway for UDP-N-acetylglucosamine (UDP-GlcNAc). The C-terminal domain catalyzes the transfer of acetyl group from acetyl coenzyme A to glucosamine-1-phosphate (GlcN-1-P) to produce N-acetylglucosamine-1-phosphate (GlcNAc-1-P), which is converted into UDP-GlcNAc by the transfer of uridine 5-monophosphate (from uridine 5-triphosphate), a reaction catalyzed by the N-terminal domain. The sequence is that of Bifunctional protein GlmU from Staphylococcus aureus (strain Mu50 / ATCC 700699).